We begin with the raw amino-acid sequence, 247 residues long: Ribosomal RNA small subunit methyltransferase J (247 aa).

Residues 106–107, 122–123, and aspartate 168 each bind S-adenosyl-L-methionine; these read RD and ER.

The protein belongs to the methyltransferase superfamily. RsmJ family.

It localises to the cytoplasm. The catalysed reaction is guanosine(1516) in 16S rRNA + S-adenosyl-L-methionine = N(2)-methylguanosine(1516) in 16S rRNA + S-adenosyl-L-homocysteine + H(+). Its function is as follows. Specifically methylates the guanosine in position 1516 of 16S rRNA. The polypeptide is Ribosomal RNA small subunit methyltransferase J (Alcanivorax borkumensis (strain ATCC 700651 / DSM 11573 / NCIMB 13689 / SK2)).